A 571-amino-acid chain; its full sequence is Proline--tRNA ligase (571 aa).

Belongs to the class-II aminoacyl-tRNA synthetase family. ProS type 1 subfamily. As to quaternary structure, homodimer.

The protein localises to the cytoplasm. It carries out the reaction tRNA(Pro) + L-proline + ATP = L-prolyl-tRNA(Pro) + AMP + diphosphate. Functionally, catalyzes the attachment of proline to tRNA(Pro) in a two-step reaction: proline is first activated by ATP to form Pro-AMP and then transferred to the acceptor end of tRNA(Pro). As ProRS can inadvertently accommodate and process non-cognate amino acids such as alanine and cysteine, to avoid such errors it has two additional distinct editing activities against alanine. One activity is designated as 'pretransfer' editing and involves the tRNA(Pro)-independent hydrolysis of activated Ala-AMP. The other activity is designated 'posttransfer' editing and involves deacylation of mischarged Ala-tRNA(Pro). The misacylated Cys-tRNA(Pro) is not edited by ProRS. The sequence is that of Proline--tRNA ligase from Shewanella frigidimarina (strain NCIMB 400).